The chain runs to 132 residues: Interleukin-5 (132 aa).

A signal peptide spans 1–19; the sequence is MHLRLTLVALGAAYVCANA. N-linked (GlcNAc...) asparagine glycosylation is found at asparagine 74 and asparagine 88.

The protein belongs to the IL-5 family. In terms of assembly, homodimer; disulfide-linked. Interacts with IL5RA. Interacts with CSF2RB.

It is found in the secreted. Its function is as follows. Homodimeric cytokine expressed predominantly by T-lymphocytes and NK cells that plays an important role in the survival, differentiation, and chemotaxis of eosinophils. Also acts on activated and resting B-cells to induce immunoglobulin production, growth, and differentiation. Mechanistically, exerts its biological effects through a receptor composed of IL5RA subunit and the cytokine receptor common subunit beta/CSF2RB. Binding to the receptor leads to activation of various kinases including LYN, SYK and JAK2 and thereby propagates signals through the RAS-MAPK and JAK-STAT5 pathways respectively. This chain is Interleukin-5 (IL5), found in Ovis aries (Sheep).